We begin with the raw amino-acid sequence, 537 residues long: ATP synthase subunit alpha (537 aa).

Residue 174-181 (GDRQTGKT) coordinates ATP.

Belongs to the ATPase alpha/beta chains family. In terms of assembly, F-type ATPases have 2 components, CF(1) - the catalytic core - and CF(0) - the membrane proton channel. CF(1) has five subunits: alpha(3), beta(3), gamma(1), delta(1), epsilon(1). CF(0) has three main subunits: a(1), b(2) and c(9-12). The alpha and beta chains form an alternating ring which encloses part of the gamma chain. CF(1) is attached to CF(0) by a central stalk formed by the gamma and epsilon chains, while a peripheral stalk is formed by the delta and b chains.

It localises to the cell inner membrane. It catalyses the reaction ATP + H2O + 4 H(+)(in) = ADP + phosphate + 5 H(+)(out). Its function is as follows. Produces ATP from ADP in the presence of a proton gradient across the membrane. The alpha chain is a regulatory subunit. The sequence is that of ATP synthase subunit alpha from Verminephrobacter eiseniae (strain EF01-2).